A 944-amino-acid polypeptide reads, in one-letter code: Isoleucine--tRNA ligase (944 aa).

Positions 58–68 (PYANGSIHIGH) match the 'HIGH' region motif. Position 563 (glutamate 563) interacts with L-isoleucyl-5'-AMP. The 'KMSKS' region signature appears at 604–608 (KMSKS). Lysine 607 serves as a coordination point for ATP. Zn(2+)-binding residues include cysteine 907, cysteine 910, cysteine 927, and cysteine 930.

Belongs to the class-I aminoacyl-tRNA synthetase family. IleS type 1 subfamily. As to quaternary structure, monomer. It depends on Zn(2+) as a cofactor.

It is found in the cytoplasm. It catalyses the reaction tRNA(Ile) + L-isoleucine + ATP = L-isoleucyl-tRNA(Ile) + AMP + diphosphate. Functionally, catalyzes the attachment of isoleucine to tRNA(Ile). As IleRS can inadvertently accommodate and process structurally similar amino acids such as valine, to avoid such errors it has two additional distinct tRNA(Ile)-dependent editing activities. One activity is designated as 'pretransfer' editing and involves the hydrolysis of activated Val-AMP. The other activity is designated 'posttransfer' editing and involves deacylation of mischarged Val-tRNA(Ile). The protein is Isoleucine--tRNA ligase of Salmonella choleraesuis (strain SC-B67).